The sequence spans 518 residues: Retinal dehydrogenase 2 (518 aa).

Position 168 is a phosphotyrosine (tyrosine 168). NAD(+) contacts are provided by residues 184–186 (IPW), 210–213 (KPAE), and 264–266 (STE). Glutamate 286 acts as the Proton acceptor in catalysis. Cysteine 320 (nucleophile) is an active-site residue. Position 351 is a phosphoserine (serine 351). NAD(+)-binding positions include 366–370 (KQYNK) and glutamate 417.

Belongs to the aldehyde dehydrogenase family. In terms of assembly, homotetramer.

The protein resides in the cytoplasm. It catalyses the reaction retinal + NAD(+) + H2O = retinoate + NADH + 2 H(+). It carries out the reaction all-trans-retinal + NAD(+) + H2O = all-trans-retinoate + NADH + 2 H(+). The catalysed reaction is all-trans-13,14-dihydroretinal + NAD(+) + H2O = all-trans-13,14-dihydroretinoate + NADH + 2 H(+). Its pathway is cofactor metabolism; retinol metabolism. Catalyzes the NAD-dependent oxidation of aldehyde substrates, such as all-trans-retinal and all-trans-13,14-dihydroretinal, to their corresponding carboxylic acids, all-trans-retinoate and all-trans-13,14-dihydroretinoate, respectively. Retinoate signaling is critical for the transcriptional control of many genes, for instance it is crucial for initiation of meiosis in both male and female. Recognizes retinal as substrate, both in its free form and when bound to cellular retinol-binding protein. Lacks activity with benzaldehyde, acetaldehyde and octanal. Displays complete lack of activity with citral. The protein is Retinal dehydrogenase 2 (Aldh1a2) of Mus musculus (Mouse).